The following is a 193-amino-acid chain: Serine recombinase gin (193 aa).

Positions 1 to 134 (MLIGYVRVST…AGLAAARNKG (134 aa)) constitute a Resolvase/invertase-type recombinase catalytic domain. Residue Ser-9 is the O-(5'-phospho-DNA)-serine intermediate of the active site. The H-T-H motif DNA-binding region spans 138-183 (GRPPKLTKAEWEQAGRLLAQGIPRKQVALIYDVALSTLYKKHPAKR).

Belongs to the site-specific recombinase resolvase family. Homodimer. During inversion, two dimers associate to form a homotetramer.

The protein localises to the host cytoplasm. Performs inversion of a viral 3 kp segment (G-segment) that encodes two alternate pairs of tail fiber proteins thereby modifying the host specificity of the virus. Binds as a dimer to the viral gix sites which are 34-bp palindromic sequences that flank the invertible G-segment. Catalyzes site-specific recombination in the presence of the host factor Fis. Gin dimers bound to each of the gix sites and host factor Fis bound to the enhancer come together to form the synaptic complex. Each Gin monomer introduces a nick and becomes covalently attached to the 5'-phosphate of the DNA, resulting in double-stranded staggered breaks at both recombination sites. A 180 degrees rotation of one of the two Gin dimers followed by religation of the DNA leads to the inversion of the G-segment (G+ or G- orientation). The polypeptide is Serine recombinase gin (gin) (Escherichia phage Mu (Bacteriophage Mu)).